The chain runs to 262 residues: VPS74-like protein DDB_G0288371 (262 aa).

The protein belongs to the GOLPH3/VPS74 family.

The protein resides in the golgi apparatus. It is found in the golgi stack membrane. Phosphatidylinositol-4-phosphate-binding protein that links Golgi membranes to the cytoskeleton and may participate in the tensile force required for vesicle budding from the Golgi. Thereby, may play a role in Golgi membrane trafficking. May also bind to the coatomer to regulate Golgi membrane trafficking. May play a role in anterograde transport from the Golgi to the plasma membrane and regulate secretion. May be involved in vacuolar protein sorting. The protein is VPS74-like protein DDB_G0288371 of Dictyostelium discoideum (Social amoeba).